The chain runs to 249 residues: tRNA (guanine-N(1)-)-methyltransferase (249 aa).

Residues G113 and 133–138 contribute to the S-adenosyl-L-methionine site; that span reads LGDFVL.

Belongs to the RNA methyltransferase TrmD family. Homodimer.

The protein resides in the cytoplasm. It carries out the reaction guanosine(37) in tRNA + S-adenosyl-L-methionine = N(1)-methylguanosine(37) in tRNA + S-adenosyl-L-homocysteine + H(+). Its function is as follows. Specifically methylates guanosine-37 in various tRNAs. The sequence is that of tRNA (guanine-N(1)-)-methyltransferase from Leptothrix cholodnii (strain ATCC 51168 / LMG 8142 / SP-6) (Leptothrix discophora (strain SP-6)).